A 364-amino-acid chain; its full sequence is Aminomethyltransferase (364 aa).

This sequence belongs to the GcvT family. As to quaternary structure, the glycine cleavage system is composed of four proteins: P, T, L and H.

The catalysed reaction is N(6)-[(R)-S(8)-aminomethyldihydrolipoyl]-L-lysyl-[protein] + (6S)-5,6,7,8-tetrahydrofolate = N(6)-[(R)-dihydrolipoyl]-L-lysyl-[protein] + (6R)-5,10-methylene-5,6,7,8-tetrahydrofolate + NH4(+). Functionally, the glycine cleavage system catalyzes the degradation of glycine. The protein is Aminomethyltransferase of Salmonella paratyphi C (strain RKS4594).